The sequence spans 266 residues: Apolipoprotein A-I (266 aa).

The N-terminal stretch at 1 to 18 is a signal peptide; sequence MKAVVLTLAVLFLTGSQA. A run of 2 repeats spans residues 67-88 and 89-110. The tract at residues 67–266 is 10 X approximate tandem repeats; that stretch reads LKLLDNWDSL…DEATKKLNSQ (200 aa). At M109 the chain carries Methionine sulfoxide. The stretch at 111-121 is one 3; half-length repeat; it reads KDLEEVKKKVQ. Repeat copies occupy residues 122 to 143, 144 to 165, 166 to 187, 188 to 209, and 210 to 231. The stretch at 232–242 is one 9; half-length repeat; the sequence is PALEDLRQGLL. Copy 10 of the repeat occupies 243 to 266; sequence PVLENFRVSLLAAVDEATKKLNSQ.

Belongs to the apolipoprotein A1/A4/E family. In terms of assembly, homodimer. Interacts with APOA1BP and CLU. Component of a sperm activating protein complex (SPAP), consisting of APOA1, an immunoglobulin heavy chain, an immunoglobulin light chain and albumin. Interacts with NDRG1. Interacts with SCGB3A2. Interacts with NAXE and YJEFN3. Glycosylated. Post-translationally, palmitoylated. In terms of processing, phosphorylation sites are present in the extracellular medium.

The protein resides in the secreted. Participates in the reverse transport of cholesterol from tissues to the liver for excretion by promoting cholesterol efflux from tissues and by acting as a cofactor for the lecithin cholesterol acyltransferase (LCAT). As part of the SPAP complex, activates spermatozoa motility. This chain is Apolipoprotein A-I (APOA1), found in Leptonychotes weddellii (Weddell seal).